A 123-amino-acid polypeptide reads, in one-letter code: Large ribosomal subunit protein bL12 (123 aa).

This sequence belongs to the bacterial ribosomal protein bL12 family. In terms of assembly, homodimer. Part of the ribosomal stalk of the 50S ribosomal subunit. Forms a multimeric L10(L12)X complex, where L10 forms an elongated spine to which 2 to 4 L12 dimers bind in a sequential fashion. Binds GTP-bound translation factors.

Its function is as follows. Forms part of the ribosomal stalk which helps the ribosome interact with GTP-bound translation factors. Is thus essential for accurate translation. The polypeptide is Large ribosomal subunit protein bL12 (Bartonella bacilliformis (strain ATCC 35685 / KC583 / Herrer 020/F12,63)).